A 208-amino-acid polypeptide reads, in one-letter code: Octanoyltransferase (208 aa).

The BPL/LPL catalytic domain maps to 30-208; that stretch reads GTASEAVFIL…ILKQEFYKIF (179 aa). Residues 69-76, 142-144, and 155-157 contribute to the substrate site; these read RGGKFTYH, SIG, and GVA. Catalysis depends on Cys-173, which acts as the Acyl-thioester intermediate.

Belongs to the LipB family.

Its subcellular location is the cytoplasm. It catalyses the reaction octanoyl-[ACP] + L-lysyl-[protein] = N(6)-octanoyl-L-lysyl-[protein] + holo-[ACP] + H(+). It participates in protein modification; protein lipoylation via endogenous pathway; protein N(6)-(lipoyl)lysine from octanoyl-[acyl-carrier-protein]: step 1/2. Its function is as follows. Catalyzes the transfer of endogenously produced octanoic acid from octanoyl-acyl-carrier-protein onto the lipoyl domains of lipoate-dependent enzymes. Lipoyl-ACP can also act as a substrate although octanoyl-ACP is likely to be the physiological substrate. The polypeptide is Octanoyltransferase (Orientia tsutsugamushi (strain Ikeda) (Rickettsia tsutsugamushi)).